Here is a 489-residue protein sequence, read N- to C-terminus: Rhamnulokinase (489 aa).

13–17 (ASSGR) contributes to the ATP binding site. A disulfide bridge connects residues C68 and C222. Residues G83 and 236–238 (HDT) contribute to the substrate site. D237 functions as the Proton acceptor in the catalytic mechanism. Residue T259 participates in ATP binding. Residue N296 coordinates substrate. An ATP-binding site is contributed by Q304. C353 and C370 are joined by a disulfide. G402 lines the ATP pocket. A disulfide bond links C413 and C417.

The protein belongs to the rhamnulokinase family. Mg(2+) serves as cofactor.

It catalyses the reaction L-rhamnulose + ATP = L-rhamnulose 1-phosphate + ADP + H(+). The protein operates within carbohydrate degradation; L-rhamnose degradation; glycerone phosphate from L-rhamnose: step 2/3. Functionally, involved in the catabolism of L-rhamnose (6-deoxy-L-mannose). Catalyzes the transfer of the gamma-phosphate group from ATP to the 1-hydroxyl group of L-rhamnulose to yield L-rhamnulose 1-phosphate. The protein is Rhamnulokinase of Shigella sonnei (strain Ss046).